We begin with the raw amino-acid sequence, 439 residues long: Glucose-1-phosphate adenylyltransferase (439 aa).

Alpha-D-glucose 1-phosphate is bound by residues Y122, G187, 202-203 (EK), and S220.

Belongs to the bacterial/plant glucose-1-phosphate adenylyltransferase family. As to quaternary structure, homotetramer.

It carries out the reaction alpha-D-glucose 1-phosphate + ATP + H(+) = ADP-alpha-D-glucose + diphosphate. The protein operates within glycan biosynthesis; glycogen biosynthesis. Functionally, involved in the biosynthesis of ADP-glucose, a building block required for the elongation reactions to produce glycogen. Catalyzes the reaction between ATP and alpha-D-glucose 1-phosphate (G1P) to produce pyrophosphate and ADP-Glc. This chain is Glucose-1-phosphate adenylyltransferase, found in Thiobacillus denitrificans (strain ATCC 25259 / T1).